The following is a 149-amino-acid chain: Cell division protein SepF (149 aa).

It belongs to the SepF family. Homodimer. Interacts with FtsZ.

It localises to the cytoplasm. Its function is as follows. Cell division protein that is part of the divisome complex and is recruited early to the Z-ring. Probably stimulates Z-ring formation, perhaps through the cross-linking of FtsZ protofilaments. Its function overlaps with FtsA. The sequence is that of Cell division protein SepF from Pelotomaculum thermopropionicum (strain DSM 13744 / JCM 10971 / SI).